Reading from the N-terminus, the 447-residue chain is GTPase Der (447 aa).

2 EngA-type G domains span residues 4–165 (QIIT…PEEE) and 180–357 (LQIV…KIWN). Residues 10-17 (GRPNVGKS), 57-61 (DTPGL), 119-122 (NKCE), 186-193 (GRPNAGKS), 233-237 (DTAGL), and 298-301 (NKWD) each bind GTP. Residues 358–443 (KKITTSKLNE…PIRFIYVKTK (86 aa)) form the KH-like domain.

The protein belongs to the TRAFAC class TrmE-Era-EngA-EngB-Septin-like GTPase superfamily. EngA (Der) GTPase family. As to quaternary structure, associates with the 50S ribosomal subunit.

Functionally, GTPase that plays an essential role in the late steps of ribosome biogenesis. This is GTPase Der from Rickettsia conorii (strain ATCC VR-613 / Malish 7).